The primary structure comprises 456 residues: Phosphomethylpyrimidine synthase (456 aa).

Substrate-binding positions include N80, M109, Y139, H175, 195-197, 236-239, and E275; these read SRG and DSLR. H279 contacts Zn(2+). Y302 is a substrate binding site. H343 contributes to the Zn(2+) binding site. Positions 423, 426, and 431 each coordinate [4Fe-4S] cluster.

Belongs to the ThiC family. [4Fe-4S] cluster serves as cofactor.

The catalysed reaction is 5-amino-1-(5-phospho-beta-D-ribosyl)imidazole + S-adenosyl-L-methionine = 4-amino-2-methyl-5-(phosphooxymethyl)pyrimidine + CO + 5'-deoxyadenosine + formate + L-methionine + 3 H(+). Its pathway is cofactor biosynthesis; thiamine diphosphate biosynthesis. Its function is as follows. Catalyzes the synthesis of the hydroxymethylpyrimidine phosphate (HMP-P) moiety of thiamine from aminoimidazole ribotide (AIR) in a radical S-adenosyl-L-methionine (SAM)-dependent reaction. In Synechococcus sp. (strain ATCC 27144 / PCC 6301 / SAUG 1402/1) (Anacystis nidulans), this protein is Phosphomethylpyrimidine synthase.